The chain runs to 237 residues: Large ribosomal subunit protein uL1 (237 aa).

This sequence belongs to the universal ribosomal protein uL1 family. In terms of assembly, part of the 50S ribosomal subunit.

Functionally, binds directly to 23S rRNA. The L1 stalk is quite mobile in the ribosome, and is involved in E site tRNA release. In terms of biological role, protein L1 is also a translational repressor protein, it controls the translation of the L11 operon by binding to its mRNA. This Dehalococcoides mccartyi (strain CBDB1) protein is Large ribosomal subunit protein uL1.